We begin with the raw amino-acid sequence, 125 residues long: Ly6/PLAUR domain-containing protein 2 (125 aa).

Residues 1 to 22 (MRGTRLALLALVLAACGELAPA) form the signal peptide. In terms of domain architecture, UPAR/Ly6 spans 25 to 100 (CYVCPEPTGV…VSCCNTELCN (76 aa)). The N-linked (GlcNAc...) asparagine glycan is linked to N46. A lipid anchor (GPI-anchor amidated glycine) is attached at G103. A propeptide spans 104–125 (APALNSLHCGALTLLPLLSLRL) (removed in mature form).

The protein localises to the cell membrane. The protein is Ly6/PLAUR domain-containing protein 2 (LYPD2) of Homo sapiens (Human).